Reading from the N-terminus, the 145-residue chain is uncharacterized protein (145 aa).

This sequence to R.meliloti R00649.

This is an uncharacterized protein from Agrobacterium fabrum (strain C58 / ATCC 33970) (Agrobacterium tumefaciens (strain C58)).